The following is a 422-amino-acid chain: UDP-N-acetylglucosamine 1-carboxyvinyltransferase (422 aa).

A phosphoenolpyruvate-binding site is contributed by 22-23 (KN). Position 95 (Arg95) interacts with UDP-N-acetyl-alpha-D-glucosamine. The Proton donor role is filled by Cys119. Cys119 bears the 2-(S-cysteinyl)pyruvic acid O-phosphothioketal mark. Residues 124–128 (RPIDQ), Asp309, and Val331 contribute to the UDP-N-acetyl-alpha-D-glucosamine site.

The protein belongs to the EPSP synthase family. MurA subfamily.

It is found in the cytoplasm. The catalysed reaction is phosphoenolpyruvate + UDP-N-acetyl-alpha-D-glucosamine = UDP-N-acetyl-3-O-(1-carboxyvinyl)-alpha-D-glucosamine + phosphate. It participates in cell wall biogenesis; peptidoglycan biosynthesis. In terms of biological role, cell wall formation. Adds enolpyruvyl to UDP-N-acetylglucosamine. The polypeptide is UDP-N-acetylglucosamine 1-carboxyvinyltransferase (Anaeromyxobacter sp. (strain K)).